Reading from the N-terminus, the 325-residue chain is Olfactory receptor 5T18 (325 aa).

Residues 1-22 (MRNITEATFFVLKGLTDNNELQ) lie on the Extracellular side of the membrane. N-linked (GlcNAc...) asparagine glycosylation is present at N3. 2 helical membrane passes run 23–43 (IILF…NVGL) and 44–64 (IILV…LSVL). The Extracellular segment spans residues 65 to 97 (SSVDACYSTDITPNMLVGFMSKSKIISFYGCAT). The cysteines at positions 95 and 187 are disulfide-linked. A helical membrane pass occupies residues 98 to 118 (QMFLAVTFGTTECFLLAAMAY). Residues 119–139 (DRYVAIHDPLLYAVSMSPRVY) are Cytoplasmic-facing. The chain crosses the membrane as a helical span at residues 140 to 160 (IPLIIASYAGGIVHAIIHTVA). Topologically, residues 161-194 (TFSLSFCRSNEVKHIFCDIPPLLAISCSETYVNE) are extracellular. A helical transmembrane segment spans residues 195-215 (LLLFFFVSFIELVTILIVLVS). Topologically, residues 216-234 (YAFILLSILKMNSSEGRRK) are cytoplasmic. Residues 235–255 (VFSTCGAHLTAVSIYYGTILF) traverse the membrane as a helical segment. Over 256-269 (MYVRPSSNYSLEHD) the chain is Extracellular. A helical transmembrane segment spans residues 270 to 290 (MIVSTFYTIGIPMLNPIIYSL). Residues 291-325 (RNKDVKEAMKRVLRKKINIKHRIKKLNDFSVFLMP) are Cytoplasmic-facing.

Belongs to the G-protein coupled receptor 1 family.

The protein localises to the cell membrane. Its function is as follows. Potential odorant receptor. This chain is Olfactory receptor 5T18, found in Mus musculus (Mouse).